The chain runs to 753 residues: MRPVSVWQWSPWGLLLCLLCSSCLGSPSPSTGPEKKAGSQGLRFRLAGFPRKPYEGRVEIQRAGEWGTICDDDFTLQAAHILCRELGFTEATGWTHSAKYGPGTGRIWLDNLSCSGTEQSVTECASRGWGNSDCTHDEDAGVICKDQRLPGFSDSNVIEVEHHLQVEEVRIRPAVGWGRRPLPVTEGLVEVRLPDGWSQVCDKGWSAHNSHVVCGMLGFPSEKRVNAAFYRLLAQRQQHSFGLHGVACVGTEAHLSLCSLEFYRANDTARCPGGGPAVVSCVPGPVYAASSGQKKQQQSKPQGEARVRLKGGAHPGEGRVEVLKASTWGTVCDRKWDLHAASVVCRELGFGSAREALSGARMGQGMGAIHLSEVRCSGQELSLWKCPHKNITAEDCSHSQDAGVRCNLPYTGAETRIRLSGGRSQHEGRVEVQIGGPGPLRWGLICGDDWGTLEAMVACRQLGLGYANHGLQETWYWDSGNITEVVMSGVRCTGTELSLDQCAHHGTHITCKRTGTRFTAGVICSETASDLLLHSALVQETAYIEDRPLHMLYCAAEENCLASSARSANWPYGHRRLLRFSSQIHNLGRADFRPKAGRHSWVWHECHGHYHSMDIFTHYDILTPNGTKVAEGHKASFCLEDTECQEDVSKRYECANFGEQGITVGCWDLYRHDIDCQWIDITDVKPGNYILQVVINPNFEVAESDFTNNAMKCNCKYDGHRIWVHNCHIGDAFSEEANRRFERYPGQTSNQII.

An N-terminal signal peptide occupies residues 1 to 25; that stretch reads MRPVSVWQWSPWGLLLCLLCSSCLG. SRCR domains are found at residues 44–145 and 169–282; these read FRLA…VICK and VRIR…VSCV. 6 disulfides stabilise this stretch: Cys-70/Cys-134, Cys-83/Cys-144, Cys-114/Cys-124, Cys-201/Cys-271, Cys-214/Cys-281, and Cys-248/Cys-258. The N-linked (GlcNAc...) asparagine glycan is linked to Asn-111. Asn-266 carries an N-linked (GlcNAc...) asparagine glycan. The segment covering 290–302 has biased composition (low complexity); sequence SSGQKKQQQSKPQ. The disordered stretch occupies residues 290-315; that stretch reads SSGQKKQQQSKPQGEARVRLKGGAHP. 2 SRCR domains span residues 307–407 and 417–525; these read VRLK…VRCN and IRLS…VICS. Disulfide bonds link Cys-332–Cys-396, Cys-345–Cys-406, Cys-376–Cys-386, Cys-446–Cys-511, Cys-459–Cys-524, Cys-492–Cys-502, Cys-554–Cys-560, Cys-606–Cys-654, Cys-638–Cys-644, Cys-666–Cys-676, and Cys-713–Cys-727. Residues Asn-390 and Asn-481 are each glycosylated (N-linked (GlcNAc...) asparagine). The lysyl-oxidase like stretch occupies residues 529 to 732; that stretch reads SDLLLHSALV…WVHNCHIGDA (204 aa). His-607, His-609, and His-611 together coordinate Cu cation. Asn-625 carries N-linked (GlcNAc...) asparagine glycosylation. Positions 634–670 form a cross-link, lysine tyrosylquinone (Lys-Tyr); the sequence is KASFCLEDTECQEDVSKRYECANFGEQGITVGCWDLY. Tyr-670 is subject to 2',4',5'-topaquinone.

This sequence belongs to the lysyl oxidase family. In terms of assembly, interacts with STAT3. It depends on Cu cation as a cofactor. The cofactor is lysine tyrosylquinone residue. Post-translationally, the lysine tyrosylquinone cross-link (LTQ) is generated by condensation of the epsilon-amino group of a lysine with a topaquinone produced by oxidation of tyrosine. Isoform 1: Predominantly detected in the heart, placenta, lung, and small intestine. Isoform 2: Highly detected in the kidney, pancreas, spleen, and thymus, and is absent in lung. In eye, present in all layers of corneas as well as in the limbus and conjunctiva (at protein level).

It localises to the secreted. The protein resides in the extracellular space. It is found in the cytoplasm. The protein localises to the nucleus. The catalysed reaction is L-lysyl-[protein] + O2 + H2O = (S)-2-amino-6-oxohexanoyl-[protein] + H2O2 + NH4(+). It carries out the reaction N(6)-acetyl-L-lysyl-[protein] + O2 + H2O = acetamide + (S)-2-amino-6-oxohexanoyl-[protein] + H2O2. In terms of biological role, protein-lysine 6-oxidase that mediates the oxidation of peptidyl lysine residues to allysine in target proteins. Catalyzes the post-translational oxidative deamination of peptidyl lysine residues in precursors of elastin and different types of collagens, a prerequisite in the formation of cross-links between collagens and elastin. Required for somite boundary formation by catalyzing oxidation of fibronectin (FN1), enhancing integrin signaling in myofibers and their adhesion to the myotendinous junction (MTJ). Acts as a regulator of inflammatory response by inhibiting differentiation of naive CD4(+) T-cells into T-helper Th17 or regulatory T-cells (Treg): acts by interacting with STAT3 in the nucleus and catalyzing both deacetylation and oxidation of lysine residues on STAT3, leading to disrupt STAT3 dimerization and inhibit STAT3 transcription activity. Oxidation of lysine residues to allysine on STAT3 preferentially takes place on lysine residues that are acetylated. Also able to catalyze deacetylation of lysine residues on STAT3. Shows protein-lysine 6-oxidase activity toward elastin and different types of collagens, with the highest activity toward collagen type VIII. Its function is as follows. Shows protein-lysine 6-oxidase activity toward elastin and different types of collagens, with the highest activity toward collagen type IV. This chain is Lysyl oxidase homolog 3, found in Homo sapiens (Human).